The following is a 415-amino-acid chain: Arrestin red cell isoform 3 (415 aa).

The protein belongs to the arrestin family.

It is found in the cytoplasm. The protein is Arrestin red cell isoform 3 of Oncorhynchus mykiss (Rainbow trout).